Here is a 148-residue protein sequence, read N- to C-terminus: Small ribosomal subunit protein uS7m (148 aa).

It belongs to the universal ribosomal protein uS7 family. Part of the small ribosomal subunit.

Its subcellular location is the mitochondrion. Functionally, one of the primary rRNA binding proteins, it binds directly to 18S rRNA where it nucleates assembly of the head domain of the small subunit. This Arabidopsis thaliana (Mouse-ear cress) protein is Small ribosomal subunit protein uS7m (RPS7).